The sequence spans 723 residues: uncharacterized protein (723 aa).

Basic residues predominate over residues 1–12; that stretch reads MTGKKKNRHQKK. Disordered regions lie at residues 1 to 166, 181 to 212, 268 to 289, and 391 to 455; these read MTGK…EKEI, IKRKKEKKVKPQPVQPTPPVPAPAPQQSSGWG, LPLSDTEDSDNDNDNGGDDNDN, and KNKS…NTST. Over residues 30–42 the composition is skewed to low complexity; it reads DETTTTTTTTTTT. 2 stretches are compositionally biased toward basic and acidic residues: residues 45–129 and 149–166; these read EETK…KTDD and TDIKDEKKEEKKKVEKEI. A coiled-coil region spans residues 53–173; the sequence is IVENKDEDKK…KEIEDPNKKY (121 aa). Residues 181-190 show a composition bias toward basic residues; that stretch reads IKRKKEKKVK. The span at 193–204 shows a compositional bias: pro residues; that stretch reads PVQPTPPVPAPA. Over residues 272–288 the composition is skewed to acidic residues; the sequence is DTEDSDNDNDNGGDDND. Over residues 397–455 the composition is skewed to low complexity; that stretch reads DENNNNNNNNNQQQPQQQQTTSPTLSTSPTSPKSPTTTTTNTTTTTTTNTNNNNNNTST.

This is an uncharacterized protein from Dictyostelium discoideum (Social amoeba).